Here is a 144-residue protein sequence, read N- to C-terminus: Large ribosomal subunit protein uL22 (144 aa).

The segment covering arginine 124 to glutamine 137 has biased composition (basic residues). A disordered region spans residues arginine 124–lysine 144.

The protein belongs to the universal ribosomal protein uL22 family. Part of the 50S ribosomal subunit.

This protein binds specifically to 23S rRNA; its binding is stimulated by other ribosomal proteins, e.g. L4, L17, and L20. It is important during the early stages of 50S assembly. It makes multiple contacts with different domains of the 23S rRNA in the assembled 50S subunit and ribosome. Functionally, the globular domain of the protein is located near the polypeptide exit tunnel on the outside of the subunit, while an extended beta-hairpin is found that lines the wall of the exit tunnel in the center of the 70S ribosome. This chain is Large ribosomal subunit protein uL22, found in Mycoplasmoides gallisepticum (strain R(low / passage 15 / clone 2)) (Mycoplasma gallisepticum).